Consider the following 257-residue polypeptide: NAD-capped RNA hydrolase NudC (257 aa).

Arg-69 contacts substrate. Cys-98 and Cys-101 together coordinate Zn(2+). Glu-111 serves as a coordination point for substrate. Zn(2+)-binding residues include Cys-116 and Cys-119. Residue Tyr-124 participates in substrate binding. In terms of domain architecture, Nudix hydrolase spans 125–248; sequence PQIAPCIIVA…TVARRLIEDT (124 aa). Residues Ala-158, Glu-174, and Glu-178 each contribute to the a divalent metal cation site. The Nudix box motif lies at 159–180; the sequence is GFVEVGETLEQAVAREVMEESG. Substrate is bound at residue 192–199; the sequence is QPWPFPQS. Position 219 (Glu-219) interacts with a divalent metal cation. Ala-241 provides a ligand contact to substrate.

Belongs to the Nudix hydrolase family. NudC subfamily. In terms of assembly, homodimer. Requires Mg(2+) as cofactor. The cofactor is Mn(2+). Zn(2+) serves as cofactor.

It carries out the reaction a 5'-end NAD(+)-phospho-ribonucleoside in mRNA + H2O = a 5'-end phospho-adenosine-phospho-ribonucleoside in mRNA + beta-nicotinamide D-ribonucleotide + 2 H(+). The catalysed reaction is NAD(+) + H2O = beta-nicotinamide D-ribonucleotide + AMP + 2 H(+). It catalyses the reaction NADH + H2O = reduced beta-nicotinamide D-ribonucleotide + AMP + 2 H(+). Functionally, mRNA decapping enzyme that specifically removes the nicotinamide adenine dinucleotide (NAD) cap from a subset of mRNAs by hydrolyzing the diphosphate linkage to produce nicotinamide mononucleotide (NMN) and 5' monophosphate mRNA. The NAD-cap is present at the 5'-end of some mRNAs and stabilizes RNA against 5'-processing. Has preference for mRNAs with a 5'-end purine. Catalyzes the hydrolysis of a broad range of dinucleotide pyrophosphates. The polypeptide is NAD-capped RNA hydrolase NudC (Salmonella typhimurium (strain LT2 / SGSC1412 / ATCC 700720)).